The chain runs to 350 residues: Biotin synthase (350 aa).

In terms of domain architecture, Radical SAM core spans 41 to 268 (NEVQISRLLS…LSRVRLSAGR (228 aa)). Residues cysteine 56, cysteine 60, and cysteine 63 each contribute to the [4Fe-4S] cluster site. Cysteine 100, cysteine 131, cysteine 191, and arginine 263 together coordinate [2Fe-2S] cluster.

The protein belongs to the radical SAM superfamily. Biotin synthase family. Homodimer. It depends on [4Fe-4S] cluster as a cofactor. The cofactor is [2Fe-2S] cluster.

It catalyses the reaction (4R,5S)-dethiobiotin + (sulfur carrier)-SH + 2 reduced [2Fe-2S]-[ferredoxin] + 2 S-adenosyl-L-methionine = (sulfur carrier)-H + biotin + 2 5'-deoxyadenosine + 2 L-methionine + 2 oxidized [2Fe-2S]-[ferredoxin]. It functions in the pathway cofactor biosynthesis; biotin biosynthesis; biotin from 7,8-diaminononanoate: step 2/2. Functionally, catalyzes the conversion of dethiobiotin (DTB) to biotin by the insertion of a sulfur atom into dethiobiotin via a radical-based mechanism. This chain is Biotin synthase, found in Shewanella baltica (strain OS223).